Reading from the N-terminus, the 246-residue chain is Ribonuclease 3 (246 aa).

The region spanning 18–147 (FQELQNKIGI…FIGALYLDQG (130 aa)) is the RNase III domain. Glu60 is a Mg(2+) binding site. The active site involves Asp64. Mg(2+) contacts are provided by Asp133 and Glu136. Residue Glu136 is part of the active site. The 70-residue stretch at 173–242 (DFKSQLQELV…AQMALETLRA (70 aa)) folds into the DRBM domain.

Belongs to the ribonuclease III family. Homodimer. Mg(2+) serves as cofactor.

The protein localises to the cytoplasm. It catalyses the reaction Endonucleolytic cleavage to 5'-phosphomonoester.. In terms of biological role, digests double-stranded RNA. Involved in the processing of primary rRNA transcript to yield the immediate precursors to the large and small rRNAs (23S and 16S). Processes some mRNAs, and tRNAs when they are encoded in the rRNA operon. Processes pre-crRNA and tracrRNA of type II CRISPR loci if present in the organism. The polypeptide is Ribonuclease 3 (Geobacillus kaustophilus (strain HTA426)).